The chain runs to 460 residues: Benzyl alcohol O-benzoyltransferase (460 aa).

Residues His-167 and Asp-382 each act as proton acceptor in the active site.

It belongs to the plant acyltransferase family.

The catalysed reaction is benzyl alcohol + benzoyl-CoA = benzyl benzoate + CoA. Functionally, probably involved in the formation of volatile ester benzylbenzoate. The sequence is that of Benzyl alcohol O-benzoyltransferase (HSR201) from Nicotiana tabacum (Common tobacco).